Consider the following 436-residue polypeptide: 3-ketoacyl-CoA thiolase (436 aa).

The active-site Acyl-thioester intermediate is the Cys99. Active-site proton acceptor residues include His392 and Cys422.

The protein belongs to the thiolase-like superfamily. Thiolase family. Heterotetramer of two alpha chains (FadJ) and two beta chains (FadI).

It localises to the cytoplasm. The catalysed reaction is an acyl-CoA + acetyl-CoA = a 3-oxoacyl-CoA + CoA. The protein operates within lipid metabolism; fatty acid beta-oxidation. Its function is as follows. Catalyzes the final step of fatty acid oxidation in which acetyl-CoA is released and the CoA ester of a fatty acid two carbons shorter is formed. This is 3-ketoacyl-CoA thiolase from Salmonella newport (strain SL254).